The following is a 573-amino-acid chain: Isocitrate dehydrogenase kinase/phosphatase (573 aa).

Residues 317-323 and K338 contribute to the ATP site; that span reads APGVRGM. Residue D373 is part of the active site.

Belongs to the AceK family.

It localises to the cytoplasm. It catalyses the reaction L-seryl-[isocitrate dehydrogenase] + ATP = O-phospho-L-seryl-[isocitrate dehydrogenase] + ADP + H(+). Functionally, bifunctional enzyme which can phosphorylate or dephosphorylate isocitrate dehydrogenase (IDH) on a specific serine residue. This is a regulatory mechanism which enables bacteria to bypass the Krebs cycle via the glyoxylate shunt in response to the source of carbon. When bacteria are grown on glucose, IDH is fully active and unphosphorylated, but when grown on acetate or ethanol, the activity of IDH declines drastically concomitant with its phosphorylation. The protein is Isocitrate dehydrogenase kinase/phosphatase of Pseudomonas fluorescens (strain Pf0-1).